The primary structure comprises 650 residues: 1-deoxy-D-xylulose-5-phosphate synthase (650 aa).

Residues His-73 and 113–115 (SHA) contribute to the thiamine diphosphate site. Asp-145 is a binding site for Mg(2+). Thiamine diphosphate is bound by residues 146–147 (GA), Asn-175, Tyr-287, and Glu-369. Asn-175 is a binding site for Mg(2+).

This sequence belongs to the transketolase family. DXPS subfamily. Homodimer. It depends on Mg(2+) as a cofactor. Requires thiamine diphosphate as cofactor.

The enzyme catalyses D-glyceraldehyde 3-phosphate + pyruvate + H(+) = 1-deoxy-D-xylulose 5-phosphate + CO2. The protein operates within metabolic intermediate biosynthesis; 1-deoxy-D-xylulose 5-phosphate biosynthesis; 1-deoxy-D-xylulose 5-phosphate from D-glyceraldehyde 3-phosphate and pyruvate: step 1/1. Catalyzes the acyloin condensation reaction between C atoms 2 and 3 of pyruvate and glyceraldehyde 3-phosphate to yield 1-deoxy-D-xylulose-5-phosphate (DXP). This chain is 1-deoxy-D-xylulose-5-phosphate synthase, found in Leifsonia xyli subsp. xyli (strain CTCB07).